The sequence spans 752 residues: Protein SEY1 homolog 1 (752 aa).

Topologically, residues 1-674 (MIKNQGDRYH…QKHKQDFLQN (674 aa)) are cytoplasmic. Positions 40–265 (GKKYNIVSII…YEKNVRWSDM (226 aa)) constitute a GB1/RHD3-type G domain. Residue 50-57 (GSQSTGKS) coordinates GTP. Positions 445–465 (NQLKSFVEAQLASFKQQLDNI) form a coiled coil. A helical transmembrane segment spans residues 675–695 (IPKPFWFLLLFFMYDDVLRWM). The Lumenal portion of the chain corresponds to 696–698 (GNP). Residues 699–719 (LFLYPILIILCFIGFCIAIGL) traverse the membrane as a helical segment. Topologically, residues 720–752 (HSLPKLAFQTVFRTINQALLPLIFGGISKLKTS) are cytoplasmic.

Belongs to the TRAFAC class dynamin-like GTPase superfamily. GB1/RHD3 GTPase family. RHD3 subfamily.

The protein localises to the endoplasmic reticulum membrane. Probable GTP-binding protein that may be involved in cell development. The sequence is that of Protein SEY1 homolog 1 from Paramecium tetraurelia.